We begin with the raw amino-acid sequence, 319 residues long: Malate dehydrogenase (319 aa).

Residues 10-15 (GAGNIG) and Asp34 each bind NAD(+). Positions 83 and 89 each coordinate substrate. Residues Asn96 and 119-121 (ITN) each bind NAD(+). Asn121 and Arg152 together coordinate substrate. His176 serves as the catalytic Proton acceptor.

Belongs to the LDH/MDH superfamily. MDH type 3 family.

It carries out the reaction (S)-malate + NAD(+) = oxaloacetate + NADH + H(+). In terms of biological role, catalyzes the reversible oxidation of malate to oxaloacetate. The chain is Malate dehydrogenase from Francisella novicida.